Consider the following 196-residue polypeptide: Large ribosomal subunit protein bL9 (196 aa).

Residues Gln-174–Ala-196 form a disordered region. The span at Gln-186 to Ala-196 shows a compositional bias: polar residues.

This sequence belongs to the bacterial ribosomal protein bL9 family.

In terms of biological role, binds to the 23S rRNA. The sequence is that of Large ribosomal subunit protein bL9 from Phenylobacterium zucineum (strain HLK1).